The chain runs to 312 residues: tRNA uridine(34) hydroxylase (312 aa).

Positions 145-235 (ENKNSVLVDM…GIIKYVRDAR (91 aa)) constitute a Rhodanese domain. Cys199 serves as the catalytic Cysteine persulfide intermediate.

The protein belongs to the TrhO family.

It catalyses the reaction uridine(34) in tRNA + AH2 + O2 = 5-hydroxyuridine(34) in tRNA + A + H2O. In terms of biological role, catalyzes oxygen-dependent 5-hydroxyuridine (ho5U) modification at position 34 in tRNAs. In Buchnera aphidicola subsp. Baizongia pistaciae (strain Bp), this protein is tRNA uridine(34) hydroxylase.